The primary structure comprises 261 residues: Cytochrome c oxidase subunit 3 (261 aa).

Over 1 to 15 the chain is Mitochondrial matrix; that stretch reads MTHQLHAYHMVKPSP. Residues 16 to 34 form a helical membrane-spanning segment; that stretch reads WPLTGALSAFLLTSGLIMW. The Mitochondrial intermembrane portion of the chain corresponds to 35–40; it reads FHFYST. A helical transmembrane segment spans residues 41–66; sequence ALLTLGLLTNVLTMYQWWRDIIREST. Over 67-72 the chain is Mitochondrial matrix; the sequence is YQGHHT. The chain crosses the membrane as a helical span at residues 73–105; that stretch reads TPVQKSLRYGMTLFIISEVFFFAGFFWAFYHSS. Over 106 to 128 the chain is Mitochondrial intermembrane; the sequence is LAPTPRLGCHWPPTGITPLNPLE. Residues 129-152 traverse the membrane as a helical segment; it reads VPLLNTSVLLASGVTITWAHHSLM. Residues 153-155 are Mitochondrial matrix-facing; the sequence is NGN. The chain crosses the membrane as a helical span at residues 156–183; the sequence is RKQTIQALLITILLGTYFTLVQISEYFE. The Mitochondrial intermembrane segment spans residues 184–190; that stretch reads APFTISD. Residues 191–223 form a helical membrane-spanning segment; that stretch reads GIYGSTFFVATGFHGLHVIIGSTFLLICLIRQL. Residues 224–232 lie on the Mitochondrial matrix side of the membrane; it reads FYHFTPSHH. The chain crosses the membrane as a helical span at residues 233–256; it reads FGFEAAAWYWHFVDVIWLFLYISI. The Mitochondrial intermembrane segment spans residues 257–261; that stretch reads YWWGS.

Belongs to the cytochrome c oxidase subunit 3 family. As to quaternary structure, component of the cytochrome c oxidase (complex IV, CIV), a multisubunit enzyme composed of 14 subunits. The complex is composed of a catalytic core of 3 subunits MT-CO1, MT-CO2 and MT-CO3, encoded in the mitochondrial DNA, and 11 supernumerary subunits COX4I, COX5A, COX5B, COX6A, COX6B, COX6C, COX7A, COX7B, COX7C, COX8 and NDUFA4, which are encoded in the nuclear genome. The complex exists as a monomer or a dimer and forms supercomplexes (SCs) in the inner mitochondrial membrane with NADH-ubiquinone oxidoreductase (complex I, CI) and ubiquinol-cytochrome c oxidoreductase (cytochrome b-c1 complex, complex III, CIII), resulting in different assemblies (supercomplex SCI(1)III(2)IV(1) and megacomplex MCI(2)III(2)IV(2)).

It is found in the mitochondrion inner membrane. The enzyme catalyses 4 Fe(II)-[cytochrome c] + O2 + 8 H(+)(in) = 4 Fe(III)-[cytochrome c] + 2 H2O + 4 H(+)(out). Functionally, component of the cytochrome c oxidase, the last enzyme in the mitochondrial electron transport chain which drives oxidative phosphorylation. The respiratory chain contains 3 multisubunit complexes succinate dehydrogenase (complex II, CII), ubiquinol-cytochrome c oxidoreductase (cytochrome b-c1 complex, complex III, CIII) and cytochrome c oxidase (complex IV, CIV), that cooperate to transfer electrons derived from NADH and succinate to molecular oxygen, creating an electrochemical gradient over the inner membrane that drives transmembrane transport and the ATP synthase. Cytochrome c oxidase is the component of the respiratory chain that catalyzes the reduction of oxygen to water. Electrons originating from reduced cytochrome c in the intermembrane space (IMS) are transferred via the dinuclear copper A center (CU(A)) of subunit 2 and heme A of subunit 1 to the active site in subunit 1, a binuclear center (BNC) formed by heme A3 and copper B (CU(B)). The BNC reduces molecular oxygen to 2 water molecules using 4 electrons from cytochrome c in the IMS and 4 protons from the mitochondrial matrix. This chain is Cytochrome c oxidase subunit 3 (MT-CO3), found in Papio hamadryas (Hamadryas baboon).